The primary structure comprises 187 residues: Ribosome-recycling factor (187 aa).

Belongs to the RRF family.

The protein resides in the cytoplasm. Functionally, responsible for the release of ribosomes from messenger RNA at the termination of protein biosynthesis. May increase the efficiency of translation by recycling ribosomes from one round of translation to another. The chain is Ribosome-recycling factor from Methylobacterium nodulans (strain LMG 21967 / CNCM I-2342 / ORS 2060).